A 310-amino-acid chain; its full sequence is MVYKTLFALCILTAGWRVQSLPTSAPLSVSLPTNIMPPTTIWTSSPQNTDADTASPSNGTHNNSVLPVTASAPTSLLPKNISVESREEEITSPGSNWEGTNTDPSPPGFSSTSGGVHLTTTLEEHSLGTPEAGVAATLSQSAAEPPTLISPQAPASSPSSLSTSPPEVFSVSVTTNHSSTVTSTQPTGAPTAPESPTEESSSDHTPTSHATAEPVPQEKTPPTTVSGKVMCELIDMETTTTFPRVIMQEVEHALSSGSIAAITVTVIAVVLLVFGVAAYLKIRHSSYGRLLDDHDYGSWGNYNNPLYDDS.

Positions Met1–Ser20 are cleaved as a signal peptide. Residues Leu21–Ser258 lie on the Extracellular side of the membrane. Positions Thr40 to Thr74 are enriched in polar residues. The segment at Thr40–Thr224 is disordered. Asn58, Asn62, and Asn80 each carry an N-linked (GlcNAc...) asparagine glycan. The segment covering Ser92 to Asp103 has biased composition (polar residues). The segment covering Ser150 to His209 has biased composition (low complexity). N-linked (GlcNAc...) asparagine glycosylation is present at Asn176. A helical transmembrane segment spans residues Ile259–Tyr279. The Cytoplasmic segment spans residues Leu280–Ser310. Ser298 is modified (phosphoserine).

Belongs to the PARM family. Post-translationally, highly N-glycosylated and O-glycosylated.

The protein resides in the cell membrane. The protein localises to the golgi apparatus membrane. Its subcellular location is the endosome membrane. In terms of biological role, may regulate TLP1 expression and telomerase activity, thus enabling certain prostatic cells to resist apoptosis. The polypeptide is Prostate androgen-regulated mucin-like protein 1 homolog (PARM1) (Pongo abelii (Sumatran orangutan)).